The following is a 295-amino-acid chain: Protein shisa-2 homolog (295 aa).

The signal sequence occupies residues 1–33 (MWGARRSSVSSSWNAASLLQLLLAALLAAGARA). At 34 to 110 (SGEYCHGWLD…RADKDGPDGS (77 aa)) the chain is on the extracellular side. Residues 87–108 (GCDNDRQQGAGEPGRADKDGPD) are disordered. Residues 111–131 (AVPIYVPFLIVGSVFVAFIIL) form a helical membrane-spanning segment. Residues 132–295 (GSLVAACCCR…EQKMYPAVTV (164 aa)) lie on the Cytoplasmic side of the membrane. The tract at residues 168 to 205 (PSASTSRGSSSRQSSTAASSSSSANSGARAPPTRSQTN) is disordered. A compositionally biased stretch (low complexity) spans 169 to 197 (SASTSRGSSSRQSSTAASSSSSANSGARA).

Belongs to the shisa family.

Its subcellular location is the endoplasmic reticulum membrane. Plays an essential role in the maturation of presomitic mesoderm cells by individual attenuation of both FGF and WNT signaling. The sequence is that of Protein shisa-2 homolog (SHISA2) from Homo sapiens (Human).